The sequence spans 23 residues: Brevinin-1Eb (23 aa).

Cysteine 17 and cysteine 23 are oxidised to a cystine.

The protein belongs to the frog skin active peptide (FSAP) family. Brevinin subfamily. As to expression, expressed by the skin glands.

Its subcellular location is the secreted. In terms of biological role, shows antibacterial activity against representative Gram-negative and Gram-positive bacterial species, and a very high hemolytic activity. This chain is Brevinin-1Eb, found in Pelophylax lessonae (Pool frog).